Reading from the N-terminus, the 286-residue chain is Protein Bride of doubletime (286 aa).

Interacts with dco (via nuclear localization signal). Interacts with Ankrd49; interaction promotes the stability of both complex members.

It is found in the cytoplasm. Its subcellular location is the cytosol. It localises to the cell membrane. In terms of biological role, functions in planar polarity establishment and circadian rhythms by promoting the activity and localization of dco/dbt. Required for regulating the levels of dco/dbt and per in the nuclei of photoreceptor cells and thereby is involved in normal oscillations of the circadian clock proteins in the eye. In the dark, the cry circadian and rhodopsin visual pathways, activate the accumulation of the protein into Arr1- and Arr2-dependent cytosolic foci which are required for dco localization to photoreceptor nuclei. It is possible that the accumulation into foci results in the dissociation of the protein from dco, thus allowing dco to interact with importins and microtubles for nuclear transport. By promoting nuclei localization and kinase activity of dco towards per, it is essential for regulating normal cycles of per nuclear accumulation in brain circadian neurons and thus is important for normal circadian behavior. Essential for regulating the establishment of planar cell polarity in the wing. Forms a complex with Ankrd49 which likely functions in the regulation of planar polarity by promoting the activity of dco during planar polarity establishment. Within the complex, directly promotes dco activity in regulating phosphorylation and asymmetric localization of core planar polarity proteins such as dsh. In Drosophila melanogaster (Fruit fly), this protein is Protein Bride of doubletime.